Reading from the N-terminus, the 774-residue chain is Effector protein hopW1-1 (774 aa).

Disordered regions lie at residues 1 to 33 and 301 to 340; these read MSPA…QSPQ and CQAG…VPGQ. Low complexity predominate over residues 9–23; it reads TPHSFPPSFTGTSSS. Residues 24–33 show a composition bias toward polar residues; the sequence is AENSHAQSPQ.

It belongs to the HopW family. In terms of assembly, interacts (via C-terminus) with Arabidopsis WIN1, WIN2 and WIN3.

It is found in the secreted. Functionally, induces hypersensitive response (HR). The protein is Effector protein hopW1-1 (hopW1-1) of Pseudomonas syringae pv. maculicola.